The sequence spans 717 residues: Fatty acid oxidation complex subunit alpha (717 aa).

Positions M1–A190 are enoyl-CoA hydratase/isomerase. D298 provides a ligand contact to substrate. Residues H313–G717 are 3-hydroxyacyl-CoA dehydrogenase. Residues M326, D345, V402 to E404, K409, and S431 each bind NAD(+). H452 serves as the catalytic For 3-hydroxyacyl-CoA dehydrogenase activity. Residue N455 coordinates NAD(+). N502 is a binding site for substrate.

It in the N-terminal section; belongs to the enoyl-CoA hydratase/isomerase family. The protein in the C-terminal section; belongs to the 3-hydroxyacyl-CoA dehydrogenase family. Heterotetramer of two alpha chains (FadB) and two beta chains (FadA).

It catalyses the reaction a (3S)-3-hydroxyacyl-CoA + NAD(+) = a 3-oxoacyl-CoA + NADH + H(+). The catalysed reaction is a (3S)-3-hydroxyacyl-CoA = a (2E)-enoyl-CoA + H2O. It carries out the reaction a 4-saturated-(3S)-3-hydroxyacyl-CoA = a (3E)-enoyl-CoA + H2O. The enzyme catalyses (3S)-3-hydroxybutanoyl-CoA = (3R)-3-hydroxybutanoyl-CoA. It catalyses the reaction a (3Z)-enoyl-CoA = a 4-saturated (2E)-enoyl-CoA. The catalysed reaction is a (3E)-enoyl-CoA = a 4-saturated (2E)-enoyl-CoA. Its pathway is lipid metabolism; fatty acid beta-oxidation. In terms of biological role, involved in the aerobic and anaerobic degradation of long-chain fatty acids via beta-oxidation cycle. Catalyzes the formation of 3-oxoacyl-CoA from enoyl-CoA via L-3-hydroxyacyl-CoA. It can also use D-3-hydroxyacyl-CoA and cis-3-enoyl-CoA as substrate. The polypeptide is Fatty acid oxidation complex subunit alpha (Acinetobacter baumannii (strain AB307-0294)).